A 159-amino-acid polypeptide reads, in one-letter code: Probable RNA-binding protein EIF1AD (159 aa).

An S1-like domain is found at 18–93; it reads MMEDDYALPT…VKAEICKILT (76 aa). The interval 109–159 is disordered; it reads KFTKKPVQEEATSQNKDDSDFEDDLLPNTNRPVNRDSSDEEEDEETSSEED. A compositionally biased stretch (acidic residues) spans 146–159; the sequence is SDEEEDEETSSEED.

It belongs to the EIF1AD family.

This Drosophila melanogaster (Fruit fly) protein is Probable RNA-binding protein EIF1AD.